The following is a 1235-amino-acid chain: DNA polymerase catalytic subunit (1235 aa).

2 disordered regions span residues 640-693 (QGRF…AGRH) and 1098-1134 (AAAP…ASKP). A compositionally biased stretch (basic and acidic residues) spans 650–661 (APKRPAAAREDE). A compositionally biased stretch (acidic residues) spans 662–675 (ERPEEEGEDEDERE). The span at 676–691 (EGGGEREPEGARETAG) shows a compositional bias: basic and acidic residues.

This sequence belongs to the DNA polymerase type-B family. Forms a complex with the ssDNA-binding protein UL29, the DNA polymerase processivity factor, and the alkaline exonuclease. Interacts with the putative helicase-primase complex subunit UL8; this interaction may coordinate leading and lagging strand DNA synthesis at the replication fork.

The protein resides in the host nucleus. The catalysed reaction is DNA(n) + a 2'-deoxyribonucleoside 5'-triphosphate = DNA(n+1) + diphosphate. It carries out the reaction Endonucleolytic cleavage to 5'-phosphomonoester.. Functionally, replicates viral genomic DNA. The replication complex is composed of six viral proteins: the DNA polymerase, processivity factor, primase, primase-associated factor, helicase, and ssDNA-binding protein. Additionally, the polymerase contains an intrinsic ribonuclease H (RNase H) activity that specifically degrades RNA/DNA heteroduplexes or duplex DNA substrates in the 5' to 3' direction. Therefore, it can catalyze the excision of the RNA primers that initiate the synthesis of Okazaki fragments at a replication fork during viral DNA replication. The polypeptide is DNA polymerase catalytic subunit (Human herpesvirus 1 (strain KOS) (HHV-1)).